Here is a 61-residue protein sequence, read N- to C-terminus: [Thr6]-bradykinyl-Val,Asp (61 aa).

An N-terminal signal peptide occupies residues 1 to 22; it reads MSFLKKSLFLVLFLGLVSFSIC. The propeptide occupies 23 to 50; that stretch reads EEEKRETEEEENEDEMDKESEEKRESPE. The tract at residues 24-61 is disordered; that stretch reads EEKRETEEEENEDEMDKESEEKRESPERPPGFTPFRVD. Over residues 30-41 the composition is skewed to acidic residues; the sequence is EEEENEDEMDKE. Pro-53 is modified (4-hydroxyproline; in form [Hyp3,Thr6]-bradykinyl-Val,Asp and [Hyp3,Thr6]-bradykinin).

The protein belongs to the frog skin active peptide (FSAP) family. Bradykinin-related peptide subfamily. In terms of tissue distribution, expressed by the skin glands.

Its subcellular location is the secreted. Induces relaxation of rat smooth muscle from tail artery (EC(50)=16.8 nM) and contraction of that from ileum (EC(50)=205 nM), urinary bladder (EC(50)=895 nM) and uterus (EC(50)=60.3 nM). Binds to both bradykinin receptor B1 (BDKRB1) and B2 (BDKRB2). Its function is as follows. [Hyp3,Thr6]-bradykinin: Induces relaxation of rat smooth muscle from tail artery (EC(50)=56.7 nM) and contraction of that from ileum (EC(50)=588 nM), urinary bladder (EC(50)=4.6 uM) and uterus (EC(50)=3.9 nM). Binds to both bradykinin receptor B1 (BDKRB1) and B2 (BDKRB2). In arterial smooth muscle, the effect via BDKRB1 is stronger, in uterus, ileum and urinary bladder that via BDKRB2. In terms of biological role, induces relaxation of rat smooth muscle from tail artery (EC(50)=10.8 nM) and contraction of that from ileum (EC(50)=645 nM), urinary bladder (EC(50)=1.1 uM) and uterus (EC(50)=1.2 uM). Binds to both bradykinin receptor B1 (BDKRB1) and B2 (BDKRB2). Apart from uterus smooth muscle, the effect via B2 is stronger. Functionally, [Hyp3,Thr6]-bradykinyl-Val,Asp: Induces relaxation of rat smooth muscle from tail artery (EC(50)=3.5 nM) and contraction of that from ileum (EC(50)=223 nM), urinary bladder (EC(50)=1.5 uM) and uterus (EC(50)=356 nM). Binds to both bradykinin receptor B1 (BDKRB1) and B2 (BDKRB2); the effects via B2 a stronger. This Agalychnis callidryas (Red-eyed tree frog) protein is [Thr6]-bradykinyl-Val,Asp.